We begin with the raw amino-acid sequence, 150 residues long: Cytochrome c-type biogenesis protein CcmE (150 aa).

The Cytoplasmic segment spans residues 1–7 (MTRKQKR). The helical; Signal-anchor for type II membrane protein transmembrane segment at 8 to 28 (LAIIGGGVGFLTAAVLLVMFA) threads the bilayer. Over 29–150 (FSQAVAYFYV…VTLGGEENIR (122 aa)) the chain is Periplasmic. His-123 and Tyr-127 together coordinate heme.

The protein belongs to the CcmE/CycJ family.

It localises to the cell inner membrane. Heme chaperone required for the biogenesis of c-type cytochromes. Transiently binds heme delivered by CcmC and transfers the heme to apo-cytochromes in a process facilitated by CcmF and CcmH. In Sinorhizobium medicae (strain WSM419) (Ensifer medicae), this protein is Cytochrome c-type biogenesis protein CcmE.